Consider the following 110-residue polypeptide: UPF0145 protein LMOf2365_0219 (110 aa).

Belongs to the UPF0145 family.

This chain is UPF0145 protein LMOf2365_0219, found in Listeria monocytogenes serotype 4b (strain F2365).